The chain runs to 518 residues: ATP synthase subunit alpha (518 aa).

169 to 176 (GDRKTGKT) is a binding site for ATP.

It belongs to the ATPase alpha/beta chains family. In terms of assembly, F-type ATPases have 2 components, CF(1) - the catalytic core - and CF(0) - the membrane proton channel. CF(1) has five subunits: alpha(3), beta(3), gamma(1), delta(1), epsilon(1). CF(0) has three main subunits: a(1), b(2) and c(9-12). The alpha and beta chains form an alternating ring which encloses part of the gamma chain. CF(1) is attached to CF(0) by a central stalk formed by the gamma and epsilon chains, while a peripheral stalk is formed by the delta and b chains.

It localises to the cell membrane. The enzyme catalyses ATP + H2O + 4 H(+)(in) = ADP + phosphate + 5 H(+)(out). Its function is as follows. Produces ATP from ADP in the presence of a proton gradient across the membrane. The alpha chain is a regulatory subunit. The chain is ATP synthase subunit alpha from Enterococcus hirae (strain ATCC 9790 / DSM 20160 / JCM 8729 / LMG 6399 / NBRC 3181 / NCIMB 6459 / NCDO 1258 / NCTC 12367 / WDCM 00089 / R).